We begin with the raw amino-acid sequence, 358 residues long: tRNA(Ile)-lysidine synthase (358 aa).

An ATP-binding site is contributed by 35 to 40 (SGGPDS).

Belongs to the tRNA(Ile)-lysidine synthase family.

It localises to the cytoplasm. The enzyme catalyses cytidine(34) in tRNA(Ile2) + L-lysine + ATP = lysidine(34) in tRNA(Ile2) + AMP + diphosphate + H(+). In terms of biological role, ligates lysine onto the cytidine present at position 34 of the AUA codon-specific tRNA(Ile) that contains the anticodon CAU, in an ATP-dependent manner. Cytidine is converted to lysidine, thus changing the amino acid specificity of the tRNA from methionine to isoleucine. This chain is tRNA(Ile)-lysidine synthase, found in Bradyrhizobium sp. (strain BTAi1 / ATCC BAA-1182).